We begin with the raw amino-acid sequence, 142 residues long: MKTPRRRMRLAVFKALFQHEFRRDEDLEQILEEILDETYDKKAKEDARRYIRGIKENLSMIDDLISRYLEKWSLNRLSVVDRNVLRLATYELLFEKDIPIEVTIDEAIEIAKRYGTENSGKFVNGILDRIAKEHAPKEKFEL.

This sequence belongs to the NusB family. Monomer or homodimer; in equilibrium, with a preference for the monomer. Dimerization may be employed to package NusB in an inactive form until recruitment into antitermination complexes.

In terms of biological role, involved in transcription antitermination. Required for transcription of ribosomal RNA (rRNA) genes. Binds specifically to the boxA antiterminator sequence of the ribosomal RNA (rrn) operons. The polypeptide is Transcription antitermination protein NusB (Thermotoga maritima (strain ATCC 43589 / DSM 3109 / JCM 10099 / NBRC 100826 / MSB8)).